The primary structure comprises 271 residues: Expansin-B1 (271 aa).

A signal peptide spans 1 to 24 (MQLFPVILPTLCVFLHLLISGSGS). Positions 58-169 (GGACGYGSLV…RRTACKYRGK (112 aa)) constitute an Expansin-like EG45 domain. 3 disulfides stabilise this stretch: Cys61–Cys90, Cys93–Cys164, and Cys98–Cys104. One can recognise an Expansin-like CBD domain in the interval 182–263 (YWLSLLIEYE…NWVPKATYTS (82 aa)). Asn242 is a glycosylation site (N-linked (GlcNAc...) asparagine).

This sequence belongs to the expansin family. Expansin B subfamily.

It localises to the secreted. It is found in the cell wall. The protein resides in the membrane. Its function is as follows. May cause loosening and extension of plant cell walls by disrupting non-covalent bonding between cellulose microfibrils and matrix glucans. No enzymatic activity has been found. The protein is Expansin-B1 (EXPB1) of Arabidopsis thaliana (Mouse-ear cress).